We begin with the raw amino-acid sequence, 471 residues long: Ribonuclease 3 (471 aa).

Residues 1-10 (MGSKVAGKKK) are compositionally biased toward basic residues. 2 disordered regions span residues 1 to 29 (MGSK…RENI) and 168 to 189 (NLNE…PTKA). A compositionally biased stretch (polar residues) spans 20–29 (ENGSQQRENI). Over residues 172–184 (KEDEEEDEGEDSY) the composition is skewed to acidic residues. The 105-residue stretch at 227 to 331 (LSGSEMINAH…YIGGLMEDDP (105 aa)) folds into the RNase III domain. The 69-residue stretch at 369–437 (NAKRQLYSLI…AENALRDKKM (69 aa)) folds into the DRBM domain. The segment at 451-471 (SESVLKDPSQKNKKRKFSDTS) is disordered. Basic residues predominate over residues 461 to 471 (KNKKRKFSDTS).

The catalysed reaction is Endonucleolytic cleavage to 5'-phosphomonoester.. In terms of biological role, dsRNA-specific nuclease that cleaves eukaryotic pre-ribosomal RNA at the U3 snoRNP-dependent A0 site in the 5'-external transcribed spacer (ETS) and in the 3'-ETS. In vitro, cleaves synthetic 5'-ETS RNA A0 site in the absence of snoRNA or other factors. Has an essential growth function in addition to pre-rRNA processing. This is Ribonuclease 3 (RNT1) from Saccharomyces cerevisiae (strain ATCC 204508 / S288c) (Baker's yeast).